The primary structure comprises 191 residues: Protein YceI (191 aa).

An N-terminal signal peptide occupies residues 1 to 22; that stretch reads MKKNLLGFTFASLLFTTGSAVA.

It belongs to the UPF0312 family. Type 1 subfamily.

It localises to the periplasm. This Salmonella agona (strain SL483) protein is Protein YceI.